The chain runs to 419 residues: UDP-N-acetylglucosamine 1-carboxyvinyltransferase (419 aa).

Phosphoenolpyruvate is bound at residue 22–23 (KN). Residue Arg-92 participates in UDP-N-acetyl-alpha-D-glucosamine binding. The active-site Proton donor is Cys-116. Cys-116 is modified (2-(S-cysteinyl)pyruvic acid O-phosphothioketal). 2 residues coordinate UDP-N-acetyl-alpha-D-glucosamine: Asp-306 and Ile-328.

This sequence belongs to the EPSP synthase family. MurA subfamily.

The protein resides in the cytoplasm. It catalyses the reaction phosphoenolpyruvate + UDP-N-acetyl-alpha-D-glucosamine = UDP-N-acetyl-3-O-(1-carboxyvinyl)-alpha-D-glucosamine + phosphate. Its pathway is cell wall biogenesis; peptidoglycan biosynthesis. Functionally, cell wall formation. Adds enolpyruvyl to UDP-N-acetylglucosamine. The chain is UDP-N-acetylglucosamine 1-carboxyvinyltransferase from Psychromonas ingrahamii (strain DSM 17664 / CCUG 51855 / 37).